A 50-amino-acid polypeptide reads, in one-letter code: Large ribosomal subunit protein bL33B (50 aa).

This sequence belongs to the bacterial ribosomal protein bL33 family.

This Streptococcus pyogenes serotype M1 protein is Large ribosomal subunit protein bL33B.